The following is a 389-amino-acid chain: ATP phosphoribosyltransferase regulatory subunit (389 aa).

Belongs to the class-II aminoacyl-tRNA synthetase family. HisZ subfamily. Heteromultimer composed of HisG and HisZ subunits.

It localises to the cytoplasm. Its pathway is amino-acid biosynthesis; L-histidine biosynthesis; L-histidine from 5-phospho-alpha-D-ribose 1-diphosphate: step 1/9. Functionally, required for the first step of histidine biosynthesis. May allow the feedback regulation of ATP phosphoribosyltransferase activity by histidine. The polypeptide is ATP phosphoribosyltransferase regulatory subunit (Hydrogenovibrio crunogenus (strain DSM 25203 / XCL-2) (Thiomicrospira crunogena)).